A 113-amino-acid polypeptide reads, in one-letter code: Iron-sulfur cluster insertion protein ErpA (113 aa).

Residues Cys-41, Cys-105, and Cys-107 each contribute to the iron-sulfur cluster site.

Belongs to the HesB/IscA family. Homodimer. Requires iron-sulfur cluster as cofactor.

Required for insertion of 4Fe-4S clusters for at least IspG. This Glaesserella parasuis serovar 5 (strain SH0165) (Haemophilus parasuis) protein is Iron-sulfur cluster insertion protein ErpA.